Reading from the N-terminus, the 691-residue chain is Histone-lysine N-methyltransferase Set8 (691 aa).

The segment at 1 to 29 (MIMVRRRQRPAKEAASSSSGGASSGSGIP) is disordered. Over residues 14-27 (AASSSSGGASSGSG) the composition is skewed to low complexity. Residues Ser195 and Ser250 each carry the phosphoserine modification. Thr252 is subject to Phosphothreonine. Ser281 bears the Phosphoserine mark. 4 disordered regions span residues 341 to 363 (TANT…HRIL), 382 to 401 (GSAD…TTTA), 407 to 437 (KSRR…QQQQ), and 464 to 516 (AEER…ATNG). Position 344 is a phosphothreonine (Thr344). Phosphoserine occurs at positions 346, 383, 388, and 392. Polar residues-rich tracts occupy residues 421 to 430 (YQPQLQKPPS) and 471 to 481 (NKAPATANSNK). The region spanning 555-676 (DGLQVRHFMG…PGEELTYDYG (122 aa)) is the SET domain. S-adenosyl-L-methionine is bound by residues 565 to 567 (KGR), Tyr610, and 637 to 638 (NH).

The protein belongs to the class V-like SAM-binding methyltransferase superfamily. Histone-lysine methyltransferase family. PR/SET subfamily.

Its subcellular location is the nucleus. It localises to the chromosome. It carries out the reaction L-lysyl(20)-[histone H4] + S-adenosyl-L-methionine = N(6)-methyl-L-lysyl(20)-[histone H4] + S-adenosyl-L-homocysteine + H(+). Functionally, histone methyltransferase that specifically monomethylates 'Lys-20' of histone H4. H4 'Lys-20' monomethylation is enriched during mitosis and represents a specific tag for epigenetic transcriptional repression. Mainly functions in euchromatin regions, thereby playing a central role in the silencing of euchromatic genes. Required for cell proliferation, possibly by contributing to the maintenance of proper higher-order structure of DNA and chromosome condensation during mitosis. In Drosophila melanogaster (Fruit fly), this protein is Histone-lysine N-methyltransferase Set8.